The chain runs to 163 residues: Large ribosomal subunit protein uL10 (163 aa).

This sequence belongs to the universal ribosomal protein uL10 family. As to quaternary structure, part of the ribosomal stalk of the 50S ribosomal subunit. The N-terminus interacts with L11 and the large rRNA to form the base of the stalk. The C-terminus forms an elongated spine to which L12 dimers bind in a sequential fashion forming a multimeric L10(L12)X complex.

Forms part of the ribosomal stalk, playing a central role in the interaction of the ribosome with GTP-bound translation factors. The polypeptide is Large ribosomal subunit protein uL10 (Histophilus somni (strain 129Pt) (Haemophilus somnus)).